The sequence spans 929 residues: Chaperone protein ClpC1, chloroplastic (929 aa).

The transit peptide at 1-38 directs the protein to the chloroplast; the sequence is MAMATRVLAQSTPPSLACYQRNVPSRGSGRSRRSVKMM. In terms of domain architecture, Clp R spans 95–237; that stretch reads FERFTEKAIK…RTQVIRMVGE (143 aa). Repeat regions lie at residues 98-163 and 173-237; these read FTEK…IGRG and FTPR…MVGE. Residues 257-504 form an i region; it reads LEEYGTNLTK…RVRLRHAQVP (248 aa). 302-309 provides a ligand contact to ATP; it reads GEPGVGKT. The UVR domain maps to 511 to 546; that stretch reads EKELRQITKEKNEAVRGQDFEKAGTLRDREIELRAE. The interval 552-571 is disordered; that stretch reads AKGKEMSKAESETGEEGPMV. The span at 553–562 shows a compositional bias: basic and acidic residues; sequence KGKEMSKAES. Residues 571 to 762 are II; it reads VTESDIQHIV…LLIMTSNVGS (192 aa). 645-652 lines the ATP pocket; it reads GPTGVGKS. The span at 908–919 shows a compositional bias: polar residues; the sequence is LNGGSGTPTTSL. A disordered region spans residues 908–929; the sequence is LNGGSGTPTTSLEEQEDSLPVA. Over residues 920 to 929 the composition is skewed to acidic residues; it reads EEQEDSLPVA.

It belongs to the ClpA/ClpB family. ClpC subfamily. Homodimer. May form hexamer and interact with Clp core. Interacts (via N-terminus) with CLPS1. Interacts with CLPF. Highly expressed in rosette leaves. Expressed in roots, stems and inflorescences. Expressed in photosynthetic green tissues with high levels in young, developing leaf tissues.

It is found in the plastid. The protein localises to the chloroplast stroma. The protein resides in the chloroplast membrane. Molecular chaperone that hydrolyzes ATP and is associated with the chloroplast protein import apparatus. May function as the motor for chloroplast protein translocation, as translocation requires ATP hydrolysis in the stroma. May interact with a ClpP-like protease involved in degradation of denatured proteins in the chloroplast. Involved in the regulation of chlorophyll b biosynthesis through the destabilization of chlorophyllide a oxygenase (CAO) protein in response to the accumulation of chlorophyll b. Involved in leaf iron homeostasis. This chain is Chaperone protein ClpC1, chloroplastic, found in Arabidopsis thaliana (Mouse-ear cress).